The following is a 336-amino-acid chain: Flavonoid 6-O-methyltransferase 4 (336 aa).

S-adenosyl-L-methionine contacts are provided by Tyr140 and Asp203. Residue His241 is the Proton acceptor of the active site.

Belongs to the class I-like SAM-binding methyltransferase superfamily. Cation-independent O-methyltransferase family. Homodimer. Expressed in leaves.

It catalyses the reaction ladanein + S-adenosyl-L-methionine = salvigenin + S-adenosyl-L-homocysteine + H(+). The enzyme catalyses scutellarein 7-methyl ether + S-adenosyl-L-methionine = cirsimaritin + S-adenosyl-L-homocysteine + H(+). The protein operates within flavonoid metabolism. Flavonoid 6-O-methyltransferase involved in the biosynthesis of polymethoxylated flavonoids natural products such as nevadensin and salvigenin (SALV), aroma compounds which contribute to the flavor of sweet basil, and exhibit pharmacological activities such as anti-allergic, anti-oxidant, antibacterial, anti-proliferative, and anti-inflammatory effects. Catalyzes S-adenosylmethionine-dependent regioselective 6-O-methylation of flavonoids; active on various hydroxylated flavonoid substrates, including scutellarein-7-methyl ether (SCU7Me) and ladanein (LAD). This is Flavonoid 6-O-methyltransferase 4 from Ocimum basilicum (Sweet basil).